Consider the following 317-residue polypeptide: E3 ubiquitin-protein ligase NRDP1 (317 aa).

Residues 18–57 form an RING-type; degenerate zinc finger; that stretch reads CPICSGVLEEPVQAPHCEHAFCNACITQWFSQQQTCPVDR. The segment at 78–138 adopts an SIAH-type; degenerate zinc-finger fold; that stretch reads KLQIACDNAV…LPNHNCIKHL (61 aa).

Interacts with USP8, ERBB3, PRKN and BIRC6. Interacts with CSF2RB, EPOR, IL3RA, MYD88 and TBK1. Interacts with Clec16a. In terms of processing, autoubiquitinated. Autoubiquitination leads to proteasomal degradation. Deubiquitinated by USP8 to get stabilized which induces apoptosis.

It carries out the reaction S-ubiquitinyl-[E2 ubiquitin-conjugating enzyme]-L-cysteine + [acceptor protein]-L-lysine = [E2 ubiquitin-conjugating enzyme]-L-cysteine + N(6)-ubiquitinyl-[acceptor protein]-L-lysine.. It participates in protein modification; protein ubiquitination. In terms of biological role, acts as E3 ubiquitin-protein ligase and regulates the degradation of target proteins. Polyubiquitinates MYD88. Negatively regulates MYD88-dependent production of pro-inflammatory cytokines. Can promote TRIF-dependent production of type I interferon and inhibits infection with vesicular stomatitis virus. Also promotes activation of TBK1 and IRF3. Involved in the ubiquitination of erythropoietin (EPO) and interleukin-3 (IL-3) receptors. Thus, through maintaining basal levels of cytokine receptors, RNF41 is involved in the control of hematopoietic progenitor cell differentiation into myeloerythroid lineages. Contributes to the maintenance of steady-state ERBB3 levels by mediating its growth factor-independent degradation. Involved in the degradation of the inhibitor of apoptosis BIRC6 and thus is an important regulator of cell death by promoting apoptosis. Also acts as a PRKN modifier that accelerates its degradation, resulting in a reduction of PRKN activity, influencing the balance of intracellular redox state. The RNF41-PRKN pathway regulates autophagosome-lysosome fusion during late mitophagy. Mitophagy is a selective form of autophagy necessary for mitochondrial quality control. In Mus musculus (Mouse), this protein is E3 ubiquitin-protein ligase NRDP1 (Rnf41).